A 236-amino-acid polypeptide reads, in one-letter code: Bacterial rhodopsin CSR3 (236 aa).

Topologically, residues 1–3 (MDA) are extracellular. The helical transmembrane segment at 4–25 (VAVVYGITAAGFAVGVAIVGYL) threads the bilayer. Residues 26–34 (YASLEGSEE) lie on the Cytoplasmic side of the membrane. Residues 35 to 56 (RSILAALALIPGFAGISYVAMA) form a helical membrane-spanning segment. The Extracellular portion of the chain corresponds to 57 to 70 (FGIGTVTIGETTLV). A helical membrane pass occupies residues 71–92 (GFRYLDWVVTTPLLVGFVGYAA). Topologically, residues 93–95 (GAS) are cytoplasmic. The chain crosses the membrane as a helical span at residues 96–118 (RRAIFGVMVADALMILTGVGAVV). The Extracellular segment spans residues 119–122 (ADGT). Residues 123–150 (LKWVLFGVSTVFHVSLFAYLYLVFPRSV) traverse the membrane as a helical segment. The Cytoplasmic segment spans residues 151–153 (PDD). A helical membrane pass occupies residues 154-181 (PQRIGLFSLLKNHIGLLWIAYPLVWLAG). Residues 182-189 (PEGLGLAT) are Extracellular-facing. The chain crosses the membrane as a helical span at residues 190 to 222 (YVGVSITYAFLDLLAKVPYVYFFYARRQVFATK). Lysine 205 is modified (N6-(retinylidene)lysine). The Cytoplasmic portion of the chain corresponds to 223 to 236 (LLRDSGEVTATPAD).

This sequence belongs to the archaeal/bacterial/fungal opsin family.

It is found in the cell membrane. The polypeptide is Bacterial rhodopsin CSR3 (Haloarcula vallismortis (Halobacterium vallismortis)).